A 504-amino-acid chain; its full sequence is Acetylcholine receptor subunit epsilon (504 aa).

The first 19 residues, 1-19 (MESGVRILSLLILLHNSLA), serve as a signal peptide directing secretion. Topologically, residues 20 to 240 (SESEESRLIK…IVFNLIIQRK (221 aa)) are extracellular. N-linked (GlcNAc...) asparagine glycosylation is found at Asn88 and Asn161. Cys148 and Cys162 are oxidised to a cystine. Residues 241–265 (PLFYIINIIVPCVLISFLVVLVYFL) form a helical membrane-spanning segment. Residues 266–273 (PAKAGGQK) lie on the Cytoplasmic side of the membrane. Residues 274–292 (CTVSISVLLAQTVFLFLIA) traverse the membrane as a helical segment. The Extracellular segment spans residues 293-307 (QMVPETSLSVPLIGK). The chain crosses the membrane as a helical span at residues 308 to 329 (YLMFVMFVSTLIVLSCVIVLNV). Topologically, residues 330–473 (SLRSPSTHNL…WILIGKVLDV (144 aa)) are cytoplasmic. Residues 474–497 (LCFWVALPLFVLGTLAIFLMGHFN) form a helical membrane-spanning segment. Residues 498-504 (TAPEHPF) are Extracellular-facing.

It belongs to the ligand-gated ion channel (TC 1.A.9) family. Acetylcholine receptor (TC 1.A.9.1) subfamily. Epsilon/CHRNE sub-subfamily. As to quaternary structure, pentamer of two alpha chains, and one each of the beta, delta, and gamma (in immature muscle) or epsilon (in mature muscle) chains.

The protein resides in the postsynaptic cell membrane. The protein localises to the cell membrane. The catalysed reaction is K(+)(in) = K(+)(out). It catalyses the reaction Na(+)(in) = Na(+)(out). After binding acetylcholine, the AChR responds by an extensive change in conformation that affects all subunits and leads to opening of an ion-conducting channel across the plasma membrane. The polypeptide is Acetylcholine receptor subunit epsilon (chrne) (Xenopus laevis (African clawed frog)).